The chain runs to 313 residues: Carbamate kinase 2 (313 aa).

It belongs to the carbamate kinase family.

It localises to the cytoplasm. It carries out the reaction hydrogencarbonate + NH4(+) + ATP = carbamoyl phosphate + ADP + H2O + H(+). It participates in metabolic intermediate metabolism; carbamoyl phosphate degradation; CO(2) and NH(3) from carbamoyl phosphate: step 1/1. The polypeptide is Carbamate kinase 2 (arcC2) (Staphylococcus aureus (strain MRSA252)).